A 592-amino-acid chain; its full sequence is A-type ATP synthase subunit A (592 aa).

234–241 (GAFGTGKT) contributes to the ATP binding site.

This sequence belongs to the ATPase alpha/beta chains family. Has multiple subunits with at least A(3), B(3), C, D, E, F, H, I and proteolipid K(x).

Its subcellular location is the cell membrane. It catalyses the reaction ATP + H2O + 4 H(+)(in) = ADP + phosphate + 5 H(+)(out). Its function is as follows. Component of the A-type ATP synthase that produces ATP from ADP in the presence of a proton gradient across the membrane. The A chain is the catalytic subunit. This is A-type ATP synthase subunit A from Nitrosopumilus maritimus (strain SCM1).